The following is a 70-amino-acid chain: Small ribosomal subunit protein bS21 (70 aa).

The protein belongs to the bacterial ribosomal protein bS21 family.

This Campylobacter curvus (strain 525.92) protein is Small ribosomal subunit protein bS21.